A 28-amino-acid polypeptide reads, in one-letter code: DLQCAETCVHSPCIGPCYCKHGLICYRN.

Residues 1-28 (DLQCAETCVHSPCIGPCYCKHGLICYRN) constitute a cross-link (cyclopeptide (Asp-Asn)). 3 disulfides stabilise this stretch: Cys-4-Cys-17, Cys-8-Cys-19, and Cys-13-Cys-25.

In terms of processing, contains 3 disulfide bonds. This is a cyclic peptide. As to expression, expressed in root nodules but not in seed.

Its function is as follows. Probably participates in a plant defense mechanism. Not active against Gram-negative bacterium E.coli ATCC 700926 or Gram-positive bacterium S.aureus ATCC 12600 up to a concentration of 100 uM under low-salt conditions. The sequence is that of Cliotide T21 from Clitoria ternatea (Butterfly pea).